A 251-amino-acid polypeptide reads, in one-letter code: MLTKRIIPCLDIKNGRTVKGVNFLDLKDAGDPVALAQKYAEEGADELVFLDISATEEDRKTVIDLVRKVSETINIPFTVGGGISSVNDVEILLKNGADKVSINSSAVKNPQLINDLASAFGSQCIVVAIDAKQINGNWKVHLVGGKVATEIDLFDWAKEVENRGAGEILFTSMDHDGTKNGFANEALAKLSQTVNIPIIASGGAGTMQHFADAFLLGNADAALAASVFHFQEIRIQDLKIALKNNTIQIRL.

Active-site residues include aspartate 11 and aspartate 130.

This sequence belongs to the HisA/HisF family. In terms of assembly, heterodimer of HisH and HisF.

It localises to the cytoplasm. The catalysed reaction is 5-[(5-phospho-1-deoxy-D-ribulos-1-ylimino)methylamino]-1-(5-phospho-beta-D-ribosyl)imidazole-4-carboxamide + L-glutamine = D-erythro-1-(imidazol-4-yl)glycerol 3-phosphate + 5-amino-1-(5-phospho-beta-D-ribosyl)imidazole-4-carboxamide + L-glutamate + H(+). It functions in the pathway amino-acid biosynthesis; L-histidine biosynthesis; L-histidine from 5-phospho-alpha-D-ribose 1-diphosphate: step 5/9. Its function is as follows. IGPS catalyzes the conversion of PRFAR and glutamine to IGP, AICAR and glutamate. The HisF subunit catalyzes the cyclization activity that produces IGP and AICAR from PRFAR using the ammonia provided by the HisH subunit. The polypeptide is Imidazole glycerol phosphate synthase subunit HisF (Flavobacterium psychrophilum (strain ATCC 49511 / DSM 21280 / CIP 103535 / JIP02/86)).